We begin with the raw amino-acid sequence, 140 residues long: Nucleoside diphosphate kinase (140 aa).

6 residues coordinate ATP: Lys-11, Phe-59, Arg-87, Thr-93, Arg-104, and Asn-114. The active-site Pros-phosphohistidine intermediate is the His-117.

It belongs to the NDK family. In terms of assembly, homotetramer. The cofactor is Mg(2+).

The protein localises to the cytoplasm. The catalysed reaction is a 2'-deoxyribonucleoside 5'-diphosphate + ATP = a 2'-deoxyribonucleoside 5'-triphosphate + ADP. It catalyses the reaction a ribonucleoside 5'-diphosphate + ATP = a ribonucleoside 5'-triphosphate + ADP. Its function is as follows. Major role in the synthesis of nucleoside triphosphates other than ATP. The ATP gamma phosphate is transferred to the NDP beta phosphate via a ping-pong mechanism, using a phosphorylated active-site intermediate. This Jannaschia sp. (strain CCS1) protein is Nucleoside diphosphate kinase.